The following is a 709-amino-acid chain: Kelch-like protein 11 (709 aa).

An N-terminal signal peptide occupies residues 1 to 15 (MAAAVAAAAAAAAAA). Residues 95 to 171 (CDITLCFGGA…MYTGRIRVST (77 aa)) enclose the BTB domain. Residues 206–308 (CVAIHSLAHM…KPTYLTRHVK (103 aa)) enclose the BACK domain. 5 Kelch repeats span residues 361-408 (VIMV…ITES), 409-454 (YVYV…EVKG), 456-502 (LYSI…AIED), 504-557 (FVYI…VVNS), and 611-662 (DVFI…HVRI). Ser466 carries the phosphoserine modification.

As to quaternary structure, homodimer. Interacts with CUL3. Component of a cullin-RING-based BCR (BTB-CUL3-RBX1) E3 ubiquitin-protein ligase complex.

Its function is as follows. Component of a cullin-RING-based BCR (BTB-CUL3-RBX1) E3 ubiquitin-protein ligase complex that mediates the ubiquitination of target proteins, leading most often to their proteasomal degradation. The polypeptide is Kelch-like protein 11 (Klhl11) (Mus musculus (Mouse)).